The chain runs to 150 residues: Large ribosomal subunit protein uL15 (150 aa).

A disordered region spans residues 1–57 (MTIKLESLQSNKGSRRKKMRKGRGIAAGQGASCGFGMRGQKSRSGRPTRPGFEGGQM). A compositionally biased stretch (basic residues) spans 13 to 23 (GSRRKKMRKGR). Gly residues predominate over residues 25–37 (IAAGQGASCGFGM).

Belongs to the universal ribosomal protein uL15 family. In terms of assembly, part of the 50S ribosomal subunit.

Functionally, binds to the 23S rRNA. This Prochlorococcus marinus (strain NATL1A) protein is Large ribosomal subunit protein uL15.